We begin with the raw amino-acid sequence, 860 residues long: DNA primase (860 aa).

The segment at 804 to 842 adopts a CHC2-type zinc-finger fold; sequence CLNRQHRGNRDNVLVYIQLKADGNRLILILWSTCFATKC.

The protein belongs to the herpesviridae DNA primase family. As to quaternary structure, associates with the helicase and the primase-associated factor to form the helicase-primase factor.

The protein resides in the host nucleus. Functionally, essential component of the helicase/primase complex. Unwinds the DNA at the replication forks and generates single-stranded DNA for both leading and lagging strand synthesis. The primase initiates primer synthesis and thereby produces large amount of short RNA primers on the lagging strand that the polymerase elongates using dNTPs. The polypeptide is DNA primase (U43) (Homo sapiens (Human)).